The sequence spans 265 residues: Serine protease 1 (265 aa).

The N-terminal stretch at 1-21 (MKLFVFLALAVAAATAVPAPA) is a signal peptide. A propeptide spanning residues 22–35 (QKLTPTPIKDIQGR) is cleaved from the precursor. Residues 36 to 262 (ITNGYPAYEG…YLDWIRDNTG (227 aa)) enclose the Peptidase S1 domain. Cys63 and Cys79 are disulfide-bonded. Catalysis depends on charge relay system residues His78 and Asp123. 2 cysteine pairs are disulfide-bonded: Cys189-Cys201 and Cys211-Cys239. Ser215 serves as the catalytic Charge relay system.

The protein belongs to the peptidase S1 family. Abundantly expressed in the larval gut.

Major function may be to aid in digestion. In Drosophila melanogaster (Fruit fly), this protein is Serine protease 1.